The following is a 402-amino-acid chain: uncharacterized protein (402 aa).

This is an uncharacterized protein from Ostreid herpesvirus 1 (isolate France) (OsHV-1).